We begin with the raw amino-acid sequence, 397 residues long: Arginine biosynthesis bifunctional protein ArgJ (397 aa).

Residues Thr147, Lys173, Thr184, Glu270, Asn392, and Thr397 each contribute to the substrate site. The Nucleophile role is filled by Thr184.

The protein belongs to the ArgJ family. As to quaternary structure, heterotetramer of two alpha and two beta chains.

The protein localises to the cytoplasm. It catalyses the reaction N(2)-acetyl-L-ornithine + L-glutamate = N-acetyl-L-glutamate + L-ornithine. It carries out the reaction L-glutamate + acetyl-CoA = N-acetyl-L-glutamate + CoA + H(+). Its pathway is amino-acid biosynthesis; L-arginine biosynthesis; L-ornithine and N-acetyl-L-glutamate from L-glutamate and N(2)-acetyl-L-ornithine (cyclic): step 1/1. The protein operates within amino-acid biosynthesis; L-arginine biosynthesis; N(2)-acetyl-L-ornithine from L-glutamate: step 1/4. Its function is as follows. Catalyzes two activities which are involved in the cyclic version of arginine biosynthesis: the synthesis of N-acetylglutamate from glutamate and acetyl-CoA as the acetyl donor, and of ornithine by transacetylation between N(2)-acetylornithine and glutamate. The chain is Arginine biosynthesis bifunctional protein ArgJ from Streptococcus thermophilus (strain ATCC BAA-250 / LMG 18311).